A 540-amino-acid polypeptide reads, in one-letter code: Chaperonin GroEL (540 aa).

Residues 29–32, 86–90, G413, 477–479, and D493 each bind ATP; these read TIGP, DGTTT, and NAA.

This sequence belongs to the chaperonin (HSP60) family. As to quaternary structure, forms a cylinder of 14 subunits composed of two heptameric rings stacked back-to-back. Interacts with the co-chaperonin GroES.

It localises to the cytoplasm. It catalyses the reaction ATP + H2O + a folded polypeptide = ADP + phosphate + an unfolded polypeptide.. Together with its co-chaperonin GroES, plays an essential role in assisting protein folding. The GroEL-GroES system forms a nano-cage that allows encapsulation of the non-native substrate proteins and provides a physical environment optimized to promote and accelerate protein folding. The sequence is that of Chaperonin GroEL from Lactobacillus helveticus (strain DPC 4571).